A 266-amino-acid polypeptide reads, in one-letter code: Apolipoprotein A-I (266 aa).

The signal sequence occupies residues 1-18; that stretch reads MKAVVLTLAVLFLTGSQA. 2 consecutive repeat copies span residues 67 to 88 and 89 to 110. The segment at 67–266 is 10 X approximate tandem repeats; sequence LKLLDNWDSL…DEATKKLNSQ (200 aa). A Methionine sulfoxide modification is found at methionine 109. The stretch at 111-121 is one 3; half-length repeat; it reads KDLEEVKKKVQ. Repeat copies occupy residues 122–143, 144–165, 166–187, 188–209, and 210–231. The stretch at 232-242 is one 9; half-length repeat; the sequence is PALEDLRQGLL. Residues 243-266 form repeat 10; it reads PVLENFRVSLLAAVDEATKKLNSQ.

The protein belongs to the apolipoprotein A1/A4/E family. As to quaternary structure, homodimer. Interacts with APOA1BP and CLU. Component of a sperm activating protein complex (SPAP), consisting of APOA1, an immunoglobulin heavy chain, an immunoglobulin light chain and albumin. Interacts with NDRG1. Interacts with SCGB3A2. Interacts with NAXE and YJEFN3. In terms of processing, glycosylated. Post-translationally, palmitoylated. Phosphorylation sites are present in the extracellular medium.

It is found in the secreted. Its function is as follows. Participates in the reverse transport of cholesterol from tissues to the liver for excretion by promoting cholesterol efflux from tissues and by acting as a cofactor for the lecithin cholesterol acyltransferase (LCAT). As part of the SPAP complex, activates spermatozoa motility. The chain is Apolipoprotein A-I (APOA1) from Leptonychotes weddellii (Weddell seal).